Reading from the N-terminus, the 440-residue chain is Ribosomal protein uS12 methylthiotransferase RimO (440 aa).

Residues 2 to 118 form the MTTase N-terminal domain; that stretch reads KKAGIIHLGC…FVSLITSNGE (117 aa). The [4Fe-4S] cluster site is built by C11, C47, C81, C154, C158, and C161. The region spanning 140–370 is the Radical SAM core domain; that stretch reads ISPNFWVYVK…MSTQKEISKK (231 aa). Residues 373–440 form the TRAM domain; the sequence is AKLLGREFDV…RAYDLLGELV (68 aa).

The protein belongs to the methylthiotransferase family. RimO subfamily. [4Fe-4S] cluster is required as a cofactor.

It is found in the cytoplasm. The catalysed reaction is L-aspartate(89)-[ribosomal protein uS12]-hydrogen + (sulfur carrier)-SH + AH2 + 2 S-adenosyl-L-methionine = 3-methylsulfanyl-L-aspartate(89)-[ribosomal protein uS12]-hydrogen + (sulfur carrier)-H + 5'-deoxyadenosine + L-methionine + A + S-adenosyl-L-homocysteine + 2 H(+). Its function is as follows. Catalyzes the methylthiolation of an aspartic acid residue of ribosomal protein uS12. In Dictyoglomus thermophilum (strain ATCC 35947 / DSM 3960 / H-6-12), this protein is Ribosomal protein uS12 methylthiotransferase RimO.